We begin with the raw amino-acid sequence, 302 residues long: tRNA demethylase abh1 (302 aa).

Substrate-binding positions include Trp-142 and 149-151 (YDW). In terms of domain architecture, Fe2OG dioxygenase spans 187–299 (KAEAAIVNFY…RVNFNVRQVR (113 aa)). 194-196 (NFY) provides a ligand contact to 2-oxoglutarate. Positions 205 and 207 each coordinate Fe cation. Arg-235 is a binding site for substrate. Residue His-261 coordinates Fe cation. 290–296 (RVNFNVR) is a binding site for 2-oxoglutarate.

The protein belongs to the alkB family. Requires Fe(2+) as cofactor.

The protein resides in the cytoplasm. Its subcellular location is the nucleus. It catalyses the reaction an N(1)-methyladenosine in tRNA + 2-oxoglutarate + O2 = an adenosine in tRNA + formaldehyde + succinate + CO2. The enzyme catalyses N(1)-methyladenosine(58) in tRNA + 2-oxoglutarate + O2 = adenosine(58) in tRNA + formaldehyde + succinate + CO2. Dioxygenase that acts as on nucleic acids, such as DNA and tRNA. Requires molecular oxygen, alpha-ketoglutarate and iron. Mainly acts as a tRNA demethylase by removing N(1)-methyladenine from various tRNAs, with a preference for N(1)-methyladenine at position 58 (m1A58) present on a stem loop structure of tRNAs. Acts as a regulator of translation initiation and elongation. Does not appear to possess DNA repair activity; no activity towards methylated DNA or etheno adducts. Exhibits a weak and unstable DNA lyase activity; this activity is probably not biologically significant and proceeds by a mechanism different from the classical dioxygenase reaction as it does not require 2-oxoglutarate or iron. The sequence is that of tRNA demethylase abh1 (abh1) from Schizosaccharomyces pombe (strain 972 / ATCC 24843) (Fission yeast).